The primary structure comprises 427 residues: 3-phosphoshikimate 1-carboxyvinyltransferase (427 aa).

3-phosphoshikimate-binding residues include K22, S23, and R27. K22 is a phosphoenolpyruvate binding site. The phosphoenolpyruvate site is built by G96 and R124. S169, S170, Q171, S197, D313, N336, and K340 together coordinate 3-phosphoshikimate. Q171 contributes to the phosphoenolpyruvate binding site. D313 acts as the Proton acceptor in catalysis. Phosphoenolpyruvate is bound by residues R344, R386, and K411.

This sequence belongs to the EPSP synthase family. As to quaternary structure, monomer.

Its subcellular location is the cytoplasm. The enzyme catalyses 3-phosphoshikimate + phosphoenolpyruvate = 5-O-(1-carboxyvinyl)-3-phosphoshikimate + phosphate. It participates in metabolic intermediate biosynthesis; chorismate biosynthesis; chorismate from D-erythrose 4-phosphate and phosphoenolpyruvate: step 6/7. Functionally, catalyzes the transfer of the enolpyruvyl moiety of phosphoenolpyruvate (PEP) to the 5-hydroxyl of shikimate-3-phosphate (S3P) to produce enolpyruvyl shikimate-3-phosphate and inorganic phosphate. The polypeptide is 3-phosphoshikimate 1-carboxyvinyltransferase (Citrobacter koseri (strain ATCC BAA-895 / CDC 4225-83 / SGSC4696)).